A 1677-amino-acid chain; its full sequence is Pentafunctional AROM polypeptide (1677 aa).

The 3-dehydroquinate synthase stretch occupies residues 1 to 394 (MAVADDTKAD…YEQKASIVED (394 aa)). NAD(+) contacts are provided by residues 50–52 (DDN), 89–92 (ETSK), 120–122 (GGV), and Asp-125. Residue Arg-136 participates in 7-phospho-2-dehydro-3-deoxy-D-arabino-heptonate binding. An NAD(+)-binding site is contributed by 145–146 (TT). The 7-phospho-2-dehydro-3-deoxy-D-arabino-heptonate site is built by Asp-152 and Lys-158. Residue Lys-167 coordinates NAD(+). Asn-168 is a 7-phospho-2-dehydro-3-deoxy-D-arabino-heptonate binding site. Residues 185–188 (YLET) and Asn-196 contribute to the NAD(+) site. Position 200 (Glu-200) interacts with Zn(2+). Residues 200–203 (EVVK) and Lys-260 each bind 7-phospho-2-dehydro-3-deoxy-D-arabino-heptonate. The active-site Proton acceptor; for 3-dehydroquinate synthase activity is the Glu-270. 7-phospho-2-dehydro-3-deoxy-D-arabino-heptonate-binding positions include 274 to 278 (RNLVN) and His-281. His-281 serves as a coordination point for Zn(2+). Catalysis depends on His-285, which acts as the Proton acceptor; for 3-dehydroquinate synthase activity. Residues His-297 and Lys-366 each coordinate 7-phospho-2-dehydro-3-deoxy-D-arabino-heptonate. His-297 is a binding site for Zn(2+). The EPSP synthase stretch occupies residues 407-858 (VVPSIPTGNV…WDDLENKIGI (452 aa)). The active-site For EPSP synthase activity is Cys-840. A shikimate kinase region spans residues 885-1113 (NSSILLIGMR…GQQRRTYFLC (229 aa)). 892–899 (GMRGTGKT) contacts ATP. The tract at residues 1114–1341 (LTYPDVRHAF…AAPGQLSFKQ (228 aa)) is 3-dehydroquinase. His-1243 acts as the Proton acceptor; for 3-dehydroquinate dehydratase activity in catalysis. Lys-1271 serves as the catalytic Schiff-base intermediate with substrate; for 3-dehydroquinate dehydratase activity. A shikimate dehydrogenase region spans residues 1354–1677 (SKHFHLFGTP…TRVWEKYGEV (324 aa)).

It in the N-terminal section; belongs to the sugar phosphate cyclases superfamily. Dehydroquinate synthase family. In the 2nd section; belongs to the EPSP synthase family. This sequence in the 3rd section; belongs to the shikimate kinase family. The protein in the 4th section; belongs to the type-I 3-dehydroquinase family. It in the C-terminal section; belongs to the shikimate dehydrogenase family. As to quaternary structure, homodimer. Zn(2+) serves as cofactor.

It is found in the cytoplasm. It carries out the reaction 7-phospho-2-dehydro-3-deoxy-D-arabino-heptonate = 3-dehydroquinate + phosphate. The catalysed reaction is 3-dehydroquinate = 3-dehydroshikimate + H2O. The enzyme catalyses shikimate + NADP(+) = 3-dehydroshikimate + NADPH + H(+). It catalyses the reaction shikimate + ATP = 3-phosphoshikimate + ADP + H(+). It carries out the reaction 3-phosphoshikimate + phosphoenolpyruvate = 5-O-(1-carboxyvinyl)-3-phosphoshikimate + phosphate. The protein operates within metabolic intermediate biosynthesis; chorismate biosynthesis; chorismate from D-erythrose 4-phosphate and phosphoenolpyruvate: step 2/7. Its pathway is metabolic intermediate biosynthesis; chorismate biosynthesis; chorismate from D-erythrose 4-phosphate and phosphoenolpyruvate: step 3/7. It functions in the pathway metabolic intermediate biosynthesis; chorismate biosynthesis; chorismate from D-erythrose 4-phosphate and phosphoenolpyruvate: step 4/7. It participates in metabolic intermediate biosynthesis; chorismate biosynthesis; chorismate from D-erythrose 4-phosphate and phosphoenolpyruvate: step 5/7. The protein operates within metabolic intermediate biosynthesis; chorismate biosynthesis; chorismate from D-erythrose 4-phosphate and phosphoenolpyruvate: step 6/7. Functionally, the AROM polypeptide catalyzes 5 consecutive enzymatic reactions in prechorismate polyaromatic amino acid biosynthesis. The sequence is that of Pentafunctional AROM polypeptide from Coprinopsis cinerea (strain Okayama-7 / 130 / ATCC MYA-4618 / FGSC 9003) (Inky cap fungus).